Consider the following 1149-residue polypeptide: ATP-dependent helicase/deoxyribonuclease subunit B (1149 aa).

8–15 (GRAGSGKS) is a binding site for ATP. Residues Cys-788, Cys-1106, Cys-1109, and Cys-1115 each coordinate [4Fe-4S] cluster.

It belongs to the helicase family. AddB/RexB type 1 subfamily. In terms of assembly, heterodimer of AddA and AddB. It depends on Mg(2+) as a cofactor. [4Fe-4S] cluster serves as cofactor.

Its function is as follows. The heterodimer acts as both an ATP-dependent DNA helicase and an ATP-dependent, dual-direction single-stranded exonuclease. Recognizes the chi site generating a DNA molecule suitable for the initiation of homologous recombination. The AddB subunit has 5' -&gt; 3' nuclease activity but not helicase activity. The protein is ATP-dependent helicase/deoxyribonuclease subunit B of Ruminiclostridium cellulolyticum (strain ATCC 35319 / DSM 5812 / JCM 6584 / H10) (Clostridium cellulolyticum).